A 67-amino-acid polypeptide reads, in one-letter code: Prokaryotic ubiquitin-like protein Pup (67 aa).

Positions 1 to 36 are enriched in low complexity; that stretch reads MPQQFEQPQAQQAVTQEDDALATTQAATQTESTDQA. The segment at 1-38 is disordered; that stretch reads MPQQFEQPQAQQAVTQEDDALATTQAATQTESTDQADV. Positions 23 to 61 are ARC ATPase binding; it reads TTQAATQTESTDQADVLDDILDDIESTLETNAEEYVNSF. An Isoglutamyl lysine isopeptide (Glu-Lys) (interchain with K-? in acceptor proteins) cross-link involves residue glutamate 67.

Belongs to the prokaryotic ubiquitin-like protein family. As to quaternary structure, strongly interacts with the proteasome-associated ATPase ARC through a hydrophobic interface; the interacting region of Pup lies in its C-terminal half. There is one Pup binding site per ARC hexamer ring.

Its pathway is protein degradation; proteasomal Pup-dependent pathway. Protein modifier that is covalently attached to lysine residues of substrate proteins, thereby targeting them for proteasomal degradation. The tagging system is termed pupylation. The sequence is that of Prokaryotic ubiquitin-like protein Pup from Bifidobacterium longum subsp. infantis (strain ATCC 15697 / DSM 20088 / JCM 1222 / NCTC 11817 / S12).